A 287-amino-acid chain; its full sequence is Glycine--tRNA ligase alpha subunit (287 aa).

Belongs to the class-II aminoacyl-tRNA synthetase family. In terms of assembly, tetramer of two alpha and two beta subunits.

Its subcellular location is the cytoplasm. The catalysed reaction is tRNA(Gly) + glycine + ATP = glycyl-tRNA(Gly) + AMP + diphosphate. The chain is Glycine--tRNA ligase alpha subunit from Petrotoga mobilis (strain DSM 10674 / SJ95).